Reading from the N-terminus, the 415-residue chain is Gamma-glutamyl phosphate reductase (415 aa).

The protein belongs to the gamma-glutamyl phosphate reductase family.

It localises to the cytoplasm. The enzyme catalyses L-glutamate 5-semialdehyde + phosphate + NADP(+) = L-glutamyl 5-phosphate + NADPH + H(+). Its pathway is amino-acid biosynthesis; L-proline biosynthesis; L-glutamate 5-semialdehyde from L-glutamate: step 2/2. Functionally, catalyzes the NADPH-dependent reduction of L-glutamate 5-phosphate into L-glutamate 5-semialdehyde and phosphate. The product spontaneously undergoes cyclization to form 1-pyrroline-5-carboxylate. The polypeptide is Gamma-glutamyl phosphate reductase (Thermotoga maritima (strain ATCC 43589 / DSM 3109 / JCM 10099 / NBRC 100826 / MSB8)).